The sequence spans 585 residues: Arginine--tRNA ligase (585 aa).

The short motif at 131 to 141 (ANPTGPMHVGH) is the 'HIGH' region element.

Belongs to the class-I aminoacyl-tRNA synthetase family. In terms of assembly, monomer.

It localises to the cytoplasm. It catalyses the reaction tRNA(Arg) + L-arginine + ATP = L-arginyl-tRNA(Arg) + AMP + diphosphate. The polypeptide is Arginine--tRNA ligase (Brucella ovis (strain ATCC 25840 / 63/290 / NCTC 10512)).